The chain runs to 219 residues: MSSDDEGGEEYLFKIVIIGDSAVGKSNLLSRYARNEFNAHSKATIGVEFQTQNMEIEGKEVKAQIWDTAGQERFRAVTSAYYRGAVGALVVYDISRRSTFESVGRWLDELKTHSDTTVARMLVGNKCDLESIRAVSVEEGKALAETEGLFFMETSALDSTNVKTAFEMVIRDIYTNISRKQLNSDTYKTELSMKNRVSLVKDDNKSSTQGFGFSCCSSS.

Position 2 is an N-acetylserine (S2). 19–26 is a GTP binding site; sequence GDSAVGKS. The Effector region motif lies at 41-49; the sequence is SKATIGVEF. GTP is bound by residues 67 to 71, 125 to 128, and 155 to 156; these read DTAGQ, NKCD, and SA. S-geranylgeranyl cysteine attachment occurs at residues C215 and C216.

The protein belongs to the small GTPase superfamily. Rab family.

It localises to the cell membrane. Intracellular vesicle trafficking and protein transport. The protein is Ras-related protein RABA5d (RABA5D) of Arabidopsis thaliana (Mouse-ear cress).